A 641-amino-acid polypeptide reads, in one-letter code: MDVLKEVLSLDQDKFDQLKETSRDKTNETDDPFENYLKDCKFKAPSNKDQSPFAKLKSLQETHSNNEAAINIIIPQLIDYLTEFTNRLSNYTQDLDFIKKKSNELQSLLEYNSTKLAHISPMVNDLMIPPELIDDIIKGKINESWQDNITFIADKEEIYNKYRSNNLDQDNKDAENSAMLAPKDFDKLCQLLDILKNVILERSKRLIISKIKTLRSHNPVPSQRIQNKLLKVQKIFPFIRDNNLSLALELRQAYCYTMKWYYREYFSRYIRSLTILQFQQIDSQFALGNGLSTTSVSGFNNSPSLFFSNYLTTSASNAFYNKLPVTDEKIDKYFQIKKRLNILTQEDNTVMVSQIAENNTTKNYIEIGFKNLNLAILDNCTVEYHFLKDFFAMNGDNFEEINGLLEQIFQPTFDEATTYTQQLIQYNYDIFGVLISIRVANQLQFESERRGIPSMFDSFLNGQLIQLWPRFQQLVDFQCESLRKAAITTNVAKYAGNSSTSNSSPLTSPHELTVQFGKFLSSFLTLAITHKQSIDERSEPLYNSIIRLRNDFETVMTKCSKKTKSPERFLATNYMYLYNNLQQLHLHLNINDSDAQNYNFDSAENVGTKVANDDDNDSSVPLIIRETENHFKTLVEAFTRN.

Residues 81–110 are a coiled coil; it reads LTEFTNRLSNYTQDLDFIKKKSNELQSLLE. At Ser-602 the chain carries Phosphoserine.

The protein belongs to the VPS52 family. Component of the Golgi-associated retrograde protein (GARP) complex, also called VFT (VPS fifty-three) complex, composed of VPS51, VPS52, VPS53 and VPS54. Also interacts with TLG1 and YPT6.

Its subcellular location is the golgi apparatus. The protein resides in the trans-Golgi network membrane. It is found in the endosome membrane. It localises to the cytoplasm. The protein localises to the cytoskeleton. In terms of biological role, involved in retrograde transport from early and late endosomes to late Golgi by linking the vesicle through the t-SNARE TGL1 to the Golgi, leading to the membrane fusion between late Golgi and endosomal vesicles. May also be involved in the actin cytoskeleton organization. This chain is Vacuolar protein sorting-associated protein 52 (VPS52), found in Saccharomyces cerevisiae (strain ATCC 204508 / S288c) (Baker's yeast).